Consider the following 39-residue polypeptide: Cytochrome b559 subunit beta (39 aa).

A helical membrane pass occupies residues 14–30 (WLAVHGLAIPTVFFLGS). Position 18 (His-18) interacts with heme.

This sequence belongs to the PsbE/PsbF family. As to quaternary structure, heterodimer of an alpha subunit and a beta subunit. PSII is composed of 1 copy each of membrane proteins PsbA, PsbB, PsbC, PsbD, PsbE, PsbF, PsbH, PsbI, PsbJ, PsbK, PsbL, PsbM, PsbT, PsbX, PsbY, PsbZ, Psb30/Ycf12, at least 3 peripheral proteins of the oxygen-evolving complex and a large number of cofactors. It forms dimeric complexes. It depends on heme b as a cofactor.

Its subcellular location is the plastid membrane. Its function is as follows. This b-type cytochrome is tightly associated with the reaction center of photosystem II (PSII). PSII is a light-driven water:plastoquinone oxidoreductase that uses light energy to abstract electrons from H(2)O, generating O(2) and a proton gradient subsequently used for ATP formation. It consists of a core antenna complex that captures photons, and an electron transfer chain that converts photonic excitation into a charge separation. The chain is Cytochrome b559 subunit beta from Cuscuta gronovii (Common dodder).